A 172-amino-acid chain; its full sequence is Myosin regulatory light chain (172 aa).

Thr17 carries the phosphothreonine modification. Ser18 carries the post-translational modification Phosphoserine. 3 EF-hand domains span residues Ala27–Glu62, Asp98–Arg133, and Tyr134–Asp168. Residues Asp40, Asn42, Asp44, and Asp51 each coordinate Ca(2+).

In terms of assembly, myosin is a hexamer of 2 heavy chains and 4 light chains (two regulatory light chains and two essential light chains). Post-translationally, may be phosphorylated by let-502 or/and pak-1 and dephosphorylated by mel-11 to regulate its activation and myosin II-mediated contraction. In terms of tissue distribution, expressed in the spermathecal and uterine walls. Weak expression in gonadal sheath and intestinal muscle. Not detected in vulval, pharyngeal or body wall muscles.

The protein resides in the cytoplasm. Its subcellular location is the cytoskeleton. Its function is as follows. Regulates myosin II activity and organization during embryo elongation. May be involved in the organization of mlc-5 into bundles. Required maternally for cytokinesis during meiosis and mitosis in the early embryo and for the establishment of embryonic anterior-posterior polarity. The polypeptide is Myosin regulatory light chain (Caenorhabditis elegans).